The chain runs to 443 residues: MFLAQEIIRKKRNGDVLSTAEIQFFVDGITHNTVSEGQIAAFGMAVYFKDMNMDERIALTIAMRDSGTVLNWDSLGLNGPIIDKHSTGGVGDVISLMLGPMAAACGGYVPMISGRGLGHTGGTLDKFDAIPGYQTEPSSELFRKVVKDAGVAIIGQTGDLVPADKRFYSIRDNTATVESISLITASILSKKLAAGLDALAMDVKVGSGAFMPTYEASEELARSITAVANGAGTKTTALLTDMNQVLASCAGNAVEVREAINFLTGQYRNPRLYAVTMGLCAEMLILGGIAQNEAEARHKLNTVLDNGKAAEAFAKMVSGLGGPTDFVEAYDKYLPHAKIVRPVYANTSGFAYKMDTRELGLAVVTLGGGRRKPGDALDYSVGLTQVCALGQEVNKDVPLAMIHAQSEDAFAEAAAAIQQAIIIGDSAPEKTPEIYRYIRASDL.

This sequence belongs to the thymidine/pyrimidine-nucleoside phosphorylase family. As to quaternary structure, homodimer.

It catalyses the reaction thymidine + phosphate = 2-deoxy-alpha-D-ribose 1-phosphate + thymine. The protein operates within pyrimidine metabolism; dTMP biosynthesis via salvage pathway; dTMP from thymine: step 1/2. Functionally, the enzymes which catalyze the reversible phosphorolysis of pyrimidine nucleosides are involved in the degradation of these compounds and in their utilization as carbon and energy sources, or in the rescue of pyrimidine bases for nucleotide synthesis. The chain is Thymidine phosphorylase from Shewanella frigidimarina (strain NCIMB 400).